Here is a 325-residue protein sequence, read N- to C-terminus: Pseudouridylate synthase TRUB2, mitochondrial (325 aa).

Catalysis depends on D101, which acts as the Nucleophile. A disordered region spans residues 292–325; that stretch reads QTEGVSRGNPDREAAEGPIPGPSRGAEGEGELRA.

Belongs to the pseudouridine synthase TruB family.

The protein resides in the mitochondrion matrix. It carries out the reaction a uridine in mRNA = a pseudouridine in mRNA. It catalyses the reaction uridine(55) in tRNA = pseudouridine(55) in tRNA. Minor enzyme contributing to the isomerization of uridine to pseudouridine (pseudouridylation) of specific mitochondrial mRNAs (mt-mRNAs) such as COXI and COXIII mt-mRNAs, modulating the efficiency of mitochondrial protein synthesis without changes in transcript abundance or stability. Also catalyzes pseudouridylation of some tRNAs, including synthesis of pseudouridine(55) from uracil-55, in the psi GC loop of a subset of tRNAs. The chain is Pseudouridylate synthase TRUB2, mitochondrial from Xenopus tropicalis (Western clawed frog).